We begin with the raw amino-acid sequence, 257 residues long: Type III pantothenate kinase (257 aa).

6–13 contacts ATP; that stretch reads DVGNTNTV. Substrate-binding positions include Y102 and 109–112; that span reads GADR. The Proton acceptor role is filled by D111. D131 contacts K(+). T134 provides a ligand contact to ATP. A substrate-binding site is contributed by T186.

It belongs to the type III pantothenate kinase family. Homodimer. It depends on NH4(+) as a cofactor. K(+) serves as cofactor.

Its subcellular location is the cytoplasm. It carries out the reaction (R)-pantothenate + ATP = (R)-4'-phosphopantothenate + ADP + H(+). Its pathway is cofactor biosynthesis; coenzyme A biosynthesis; CoA from (R)-pantothenate: step 1/5. Its function is as follows. Catalyzes the phosphorylation of pantothenate (Pan), the first step in CoA biosynthesis. The protein is Type III pantothenate kinase of Leptospira borgpetersenii serovar Hardjo-bovis (strain JB197).